The chain runs to 1521 residues: Protein OPAQUE1 (1521 aa).

Positions 4-53 (RKGLKVWVEEKGEGWVEAEVVEAKERAVVVFSSQRKKITVSPEKLLPRDT) constitute a Myosin N-terminal SH3-like domain. A Myosin motor domain is found at 60–731 (GHVDDMTKLT…QIAILDMRRA (672 aa)). ATP-binding positions include 155 to 162 (GESGAGKT) and 208 to 216 (NDNSSRFGK). Actin-binding stretches follow at residues 493–527 (LIEK…FRNF), 529–552 (SHLR…AGKV), 587–612 (FTSL…KLQL), and 612–634 (LQAL…KPNS). 6 consecutive IQ domains span residues 733 to 755 (ILDN…KEFV), 756 to 778 (KTRE…KMFA), 781 to 803 (RETA…RAHL), 804 to 826 (QACL…RYFS), 829 to 851 (REHK…ILFQ), and 852 to 874 (NYRQ…KELR). Coiled-coil stretches lie at residues 870–910 (RKEL…ERRL) and 974–1050 (SAEA…LRQK). Positions 1162 to 1459 (DHVIEAINDV…VAAMREMVNK (298 aa)) constitute a Dilute domain.

It belongs to the TRAFAC class myosin-kinesin ATPase superfamily. Myosin family. Plant myosin class XI subfamily. In terms of assembly, interacts (via C-terminus) with HIP (via C-terminus), but not with zeins, FL1 or intrinsic proteins of protein bodies. High expression in kernels and stems, intermediate in ears and leaves, and low in roots, silks and tassels.

It is found in the cytoplasm. Its function is as follows. Myosin XI motor protein required for endoplasmic reticulum motility and protein body formation. May function by binding with its tail domain to receptor proteins on membranes and exerting force with its N-terminal motor domain against actin filaments, thereby transporting its cargo along polarized actin cables. This Zea mays (Maize) protein is Protein OPAQUE1.